Here is a 475-residue protein sequence, read N- to C-terminus: Ribulose bisphosphate carboxylase large chain (475 aa).

Residues 1–2 (MS) constitute a propeptide that is removed on maturation. Pro3 is subject to N-acetylproline. Lys14 carries the N6,N6,N6-trimethyllysine modification. Substrate is bound by residues Asn123 and Thr173. The Proton acceptor role is filled by Lys175. Lys177 is a substrate binding site. The Mg(2+) site is built by Lys201, Asp203, and Glu204. N6-carboxylysine is present on Lys201. His294 serves as the catalytic Proton acceptor. Substrate is bound by residues Arg295, His327, and Ser379.

The protein belongs to the RuBisCO large chain family. Type I subfamily. Heterohexadecamer of 8 large chains and 8 small chains; disulfide-linked. The disulfide link is formed within the large subunit homodimers. Mg(2+) serves as cofactor. In terms of processing, the disulfide bond which can form in the large chain dimeric partners within the hexadecamer appears to be associated with oxidative stress and protein turnover.

The protein localises to the plastid. It localises to the chloroplast. It carries out the reaction 2 (2R)-3-phosphoglycerate + 2 H(+) = D-ribulose 1,5-bisphosphate + CO2 + H2O. The enzyme catalyses D-ribulose 1,5-bisphosphate + O2 = 2-phosphoglycolate + (2R)-3-phosphoglycerate + 2 H(+). RuBisCO catalyzes two reactions: the carboxylation of D-ribulose 1,5-bisphosphate, the primary event in carbon dioxide fixation, as well as the oxidative fragmentation of the pentose substrate in the photorespiration process. Both reactions occur simultaneously and in competition at the same active site. This Cedrus deodara (Deodar cedar) protein is Ribulose bisphosphate carboxylase large chain.